A 268-amino-acid chain; its full sequence is tRNA (guanine-N(7)-)-methyltransferase (268 aa).

The tract at residues 1 to 21 (MMAGAEAPQPQKRYYRQRAHS) is disordered. Ser-21 carries the phosphoserine modification. S-adenosyl-L-methionine-binding residues include Gly-78, Glu-101, Arg-103, Asn-134, Ala-135, and Leu-154. The active site involves Asp-157. The segment at 158–166 (PHFKRTKHK) is alphaC helix. S-adenosyl-L-methionine contacts are provided by Thr-232 and Glu-234. The alpha6 helix stretch occupies residues 232–240 (TEEGKKVLR).

The protein belongs to the class I-like SAM-binding methyltransferase superfamily. TrmB family. As to quaternary structure, catalytic component of the METTL1-WDR4 complex, composed of METTL1 and WDR4. In terms of processing, phosphorylation at Ser-21 by PKB/AKT1 inactivates its methyltransferase activity via a steric interference mechanism in the active site that locally disrupts the catalytic center. Phosphorylation at Ser-21 does not affect the interaction with WDR4.

Its subcellular location is the nucleus. The enzyme catalyses guanosine(46) in tRNA + S-adenosyl-L-methionine = N(7)-methylguanosine(46) in tRNA + S-adenosyl-L-homocysteine. It catalyses the reaction a guanosine in mRNA + S-adenosyl-L-methionine = an N(7)-methylguanosine in mRNA + S-adenosyl-L-homocysteine. It carries out the reaction a guanosine in miRNA + S-adenosyl-L-methionine = an N(7)-methylguanosine in miRNA + S-adenosyl-L-homocysteine. It participates in tRNA modification; N(7)-methylguanine-tRNA biosynthesis. Its function is as follows. Catalytic component of METTL1-WDR4 methyltransferase complex that mediates the formation of N(7)-methylguanine in a subset of RNA species, such as tRNAs, mRNAs and microRNAs (miRNAs). Catalyzes the formation of N(7)-methylguanine at position 46 (m7G46) in a large subset of tRNAs that contain the 5'-RAGGU-3' motif within the variable loop. M7G46 interacts with C13-G22 in the D-loop to stabilize tRNA tertiary structure and protect tRNAs from decay. Also acts as a methyltransferase for a subset of internal N(7)-methylguanine in mRNAs. Internal N(7)-methylguanine methylation of mRNAs in response to stress promotes their relocalization to stress granules, thereby suppressing their translation. Also methylates a specific subset of miRNAs, such as let-7. N(7)-methylguanine methylation of let-7 miRNA promotes let-7 miRNA processing by disrupting an inhibitory secondary structure within the primary miRNA transcript (pri-miRNA). Acts as a regulator of embryonic stem cell self-renewal and differentiation. This Mus musculus (Mouse) protein is tRNA (guanine-N(7)-)-methyltransferase.